The following is a 510-amino-acid chain: Proline--tRNA ligase 2 (510 aa).

The protein belongs to the class-II aminoacyl-tRNA synthetase family. ProS type 3 subfamily. Homodimer.

The protein resides in the cytoplasm. The catalysed reaction is tRNA(Pro) + L-proline + ATP = L-prolyl-tRNA(Pro) + AMP + diphosphate. Functionally, catalyzes the attachment of proline to tRNA(Pro) in a two-step reaction: proline is first activated by ATP to form Pro-AMP and then transferred to the acceptor end of tRNA(Pro). In Anaeromyxobacter dehalogenans (strain 2CP-C), this protein is Proline--tRNA ligase 2.